We begin with the raw amino-acid sequence, 327 residues long: DNA-directed RNA polymerase subunit alpha (327 aa).

The tract at residues 1–231 (MIYQMQMPAK…DHVLLFADFS (231 aa)) is alpha N-terminal domain (alpha-NTD). Residues 247-327 (DEFETMRRLL…GMDITRYQMK (81 aa)) form an alpha C-terminal domain (alpha-CTD) region.

Belongs to the RNA polymerase alpha chain family. Homodimer. The RNAP catalytic core consists of 2 alpha, 1 beta, 1 beta' and 1 omega subunit. When a sigma factor is associated with the core the holoenzyme is formed, which can initiate transcription.

It catalyses the reaction RNA(n) + a ribonucleoside 5'-triphosphate = RNA(n+1) + diphosphate. DNA-dependent RNA polymerase catalyzes the transcription of DNA into RNA using the four ribonucleoside triphosphates as substrates. This chain is DNA-directed RNA polymerase subunit alpha, found in Chlorobium chlorochromatii (strain CaD3).